The primary structure comprises 348 residues: 5-deoxyribose 1-phosphate isomerase (348 aa).

Substrate-binding positions include 49–51 (RGA), R92, and Q199. Catalysis depends on D240, which acts as the Proton donor. A substrate-binding site is contributed by 250–251 (NK).

Belongs to the EIF-2B alpha/beta/delta subunits family. DrdI subfamily. In terms of assembly, homodimer.

The enzyme catalyses 5-deoxy-alpha-D-ribose 1-phosphate = 5-deoxy-D-ribulose 1-phosphate. It carries out the reaction 5-(methylsulfanyl)-alpha-D-ribose 1-phosphate = 5-(methylsulfanyl)-D-ribulose 1-phosphate. It functions in the pathway carbohydrate degradation. Functionally, catalyzes the isomerization of 5-deoxy-alpha-D-ribose 1-phosphate to 5-deoxy-D-ribulose 1-phosphate, as part of a 5-deoxyribose salvage pathway that recycles this toxic radical SAM enzyme by-product to mainstream metabolites. Also seems to be able to catalyze the conversion of methylthioribose-1-phosphate (MTR-1-P) into methylthioribulose-1-phosphate (MTRu-1-P). However this enzyme may not function in methionine salvage in B.thuringiensis since it exists a paralog (MtnA) present in the methionine salvage pathway cluster. This is 5-deoxyribose 1-phosphate isomerase from Bacillus thuringiensis serovar kurstaki (strain ATCC 35866 / NRRL B-4488 / HD73).